Consider the following 754-residue polypeptide: Phosphoinositide 3-kinase regulatory subunit 6 (754 aa).

The disordered stretch occupies residues 343–363; that stretch reads ERDLPTGADELPAPGSPEMER.

In terms of assembly, heterodimer of a catalytic subunit (PIK3CG) and a regulatory (PIK3R6) subunit. The binding of PIK3R6 to PIK3CG may exclude the binding of PIK3R5 to PIK3CG. Interacts with beta-gamma G protein dimers. Interacts with PDE3B and RAPGEF3; form a signaling complex that regulates phosphatidylinositol 3-kinase gamma in angiogenesis.

It is found in the cytoplasm. The protein localises to the cell membrane. In terms of biological role, regulatory subunit of the PI3K gamma complex. Acts as an adapter to drive activation of PIK3CG by beta-gamma G protein dimers. The PIK3CG:PIK3R6 heterodimer is much less sensitive to beta-gamma G protein dimers than PIK3CG:PIK3R5 and its membrane recruitment and beta-gamma G protein dimer-dependent activation requires HRAS bound to PIK3CG. Recruits of the PI3K gamma complex to a PDE3B:RAPGEF3 signaling complex involved in angiogenesis; signaling seems to involve RRAS. The protein is Phosphoinositide 3-kinase regulatory subunit 6 (PIK3R6) of Homo sapiens (Human).